The primary structure comprises 59 residues: Large ribosomal subunit protein uL30 (59 aa).

This sequence belongs to the universal ribosomal protein uL30 family. In terms of assembly, part of the 50S ribosomal subunit.

This Listeria welshimeri serovar 6b (strain ATCC 35897 / DSM 20650 / CCUG 15529 / CIP 8149 / NCTC 11857 / SLCC 5334 / V8) protein is Large ribosomal subunit protein uL30.